Consider the following 361-residue polypeptide: Probable mannose-1-phosphate guanylyltransferase 3 (361 aa).

Positions 6 and 7 each coordinate GDP-alpha-D-mannose. Diphosphate is bound by residues Gly9, Gly11, Thr12, Arg13, and Lys23. Residues Gly85, Asn109, Asp111, Gly146, and Asn173 each coordinate GDP-alpha-D-mannose.

Belongs to the transferase hexapeptide repeat family.

It carries out the reaction alpha-D-mannose 1-phosphate + GTP + H(+) = GDP-alpha-D-mannose + diphosphate. It functions in the pathway nucleotide-sugar biosynthesis; GDP-alpha-D-mannose biosynthesis; GDP-alpha-D-mannose from alpha-D-mannose 1-phosphate (GTP route): step 1/1. Functionally, catalyzes a reaction of the Smirnoff-Wheeler pathway, the major route to ascorbate biosynthesis in plants. This is Probable mannose-1-phosphate guanylyltransferase 3 from Oryza sativa subsp. japonica (Rice).